The following is a 369-amino-acid chain: GDSL esterase/lipase At5g42170 (369 aa).

Positions 1–16 are cleaved as a signal peptide; the sequence is MSRLVYVIFLLVVVEG. N-linked (GlcNAc...) asparagine glycosylation is found at asparagine 28 and asparagine 45. Serine 57 (nucleophile) is an active-site residue. Asparagine 203 and asparagine 336 each carry an N-linked (GlcNAc...) asparagine glycan. Active-site residues include aspartate 344 and histidine 347.

It belongs to the 'GDSL' lipolytic enzyme family.

It is found in the secreted. This is GDSL esterase/lipase At5g42170 from Arabidopsis thaliana (Mouse-ear cress).